A 161-amino-acid polypeptide reads, in one-letter code: Phosphopantetheine adenylyltransferase (161 aa).

Threonine 10 contacts substrate. Residues threonine 10–phenylalanine 11 and histidine 18 each bind ATP. Positions 42, 74, and 88 each coordinate substrate. Residues glycine 89–arginine 91, glutamate 99, and tryptophan 124–serine 130 each bind ATP.

The protein belongs to the bacterial CoaD family. As to quaternary structure, homohexamer. It depends on Mg(2+) as a cofactor.

The protein resides in the cytoplasm. The enzyme catalyses (R)-4'-phosphopantetheine + ATP + H(+) = 3'-dephospho-CoA + diphosphate. The protein operates within cofactor biosynthesis; coenzyme A biosynthesis; CoA from (R)-pantothenate: step 4/5. In terms of biological role, reversibly transfers an adenylyl group from ATP to 4'-phosphopantetheine, yielding dephospho-CoA (dPCoA) and pyrophosphate. The protein is Phosphopantetheine adenylyltransferase of Edwardsiella ictaluri (strain 93-146).